Here is a 373-residue protein sequence, read N- to C-terminus: Putative citrate synthase 2 (373 aa).

Catalysis depends on residues H250 and E303.

This sequence belongs to the citrate synthase family.

The catalysed reaction is oxaloacetate + acetyl-CoA + H2O = citrate + CoA + H(+). Its pathway is carbohydrate metabolism; tricarboxylic acid cycle; isocitrate from oxaloacetate: step 1/2. The polypeptide is Putative citrate synthase 2 (citA) (Mycobacterium bovis (strain ATCC BAA-935 / AF2122/97)).